Here is a 452-residue protein sequence, read N- to C-terminus: Phosphoglucosamine mutase (452 aa).

Catalysis depends on Ser98, which acts as the Phosphoserine intermediate. Mg(2+) contacts are provided by Ser98, Asp239, Asp241, and Asp243. Ser98 carries the post-translational modification Phosphoserine.

It belongs to the phosphohexose mutase family. The cofactor is Mg(2+). In terms of processing, activated by phosphorylation.

It catalyses the reaction alpha-D-glucosamine 1-phosphate = D-glucosamine 6-phosphate. Catalyzes the conversion of glucosamine-6-phosphate to glucosamine-1-phosphate. The protein is Phosphoglucosamine mutase of Anaplasma marginale (strain Florida).